Consider the following 918-residue polypeptide: Non-lysosomal glucosylceramidase (918 aa).

Residues 886–918 (HKKSRRPSVTQGTGLSTQPECGPKRSLANLNSE) are disordered. Positions 892 to 904 (PSVTQGTGLSTQP) are enriched in polar residues. S893 carries the post-translational modification Phosphoserine.

The protein belongs to the non-lysosomal glucosylceramidase family. Widely expressed at low level. Highly expressed in testis and brain. Ubiquitously expressed in the brain (at protein level). Expressed by Sertoli cells (at protein level).

Its subcellular location is the endoplasmic reticulum membrane. The protein resides in the golgi apparatus membrane. It carries out the reaction a beta-D-glucosyl-(1&lt;-&gt;1')-N-acylsphing-4-enine + H2O = an N-acylsphing-4-enine + D-glucose. The enzyme catalyses a beta-D-galactosyl-(1&lt;-&gt;1')-N-acylsphing-4-enine + H2O = an N-acylsphing-4-enine + D-galactose. The catalysed reaction is beta-D-glucosyl-(1-&gt;3)-O-lithocholate + H2O = lithocholate + D-glucose. It catalyses the reaction beta-D-glucosyl-(1-&gt;3)-O-chenodeoxycholate + H2O = chenodeoxycholate + D-glucose. It carries out the reaction a di-trans,poly-cis-dolichyl beta-D-glucosyl phosphate + chenodeoxycholate = beta-D-glucosyl-(1-&gt;3)-O-chenodeoxycholate + a di-trans,poly-cis-dolichyl phosphate + H(+). The enzyme catalyses octyl beta-D-glucose + chenodeoxycholate = beta-D-glucosyl-(1-&gt;3)-O-chenodeoxycholate + octan-1-ol. The catalysed reaction is cholesteryl 3-beta-D-glucoside + H2O = cholesterol + D-glucose. It catalyses the reaction a beta-D-glucosyl-(1&lt;-&gt;1')-N-acylsphing-4-enine + cholesterol = cholesteryl 3-beta-D-glucoside + an N-acylsphing-4-enine. It carries out the reaction beta-D-glucosyl-N-(9Z-octadecenoyl)-sphing-4E-enine + cholesterol = N-(9Z-octadecenoyl)-sphing-4-enine + cholesteryl 3-beta-D-glucoside. The enzyme catalyses a beta-D-galactosyl-(1&lt;-&gt;1')-N-acylsphing-4-enine + cholesterol = cholesteryl 3-beta-D-galactoside + an N-acylsphing-4-enine. The catalysed reaction is 1-(beta-D-galactosyl)-N-dodecanoylsphing-4-enine + cholesterol = cholesteryl 3-beta-D-galactoside + N-dodecanoylsphing-4-enine. Its pathway is lipid metabolism; sphingolipid metabolism. It participates in steroid metabolism; cholesterol metabolism. With respect to regulation, enzymatic activity is dependent on membrane association and requires the presence of lipids. Inhibited by N-(adamantanemethyloxypentyl)-deoxynojirimycin/AMP-DNM. Inhibited by its product sphingosine/N-acylsphing-4-enine in a feedback loop. Also inhibited by other non-acetylated sphingoid bases and their derivatives but not by sphingosine-1-phosphate and complex sphingolipids. Non-lysosomal glucosylceramidase that catalyzes the hydrolysis of glucosylceramides/GlcCers (such as beta-D-glucosyl-(1&lt;-&gt;1')-N-acylsphing-4-enine) to free glucose and ceramides (such as N-acylsphing-4-enine). GlcCers are membrane glycosphingolipids that have a wide intracellular distribution. They are the main precursors of more complex glycosphingolipids that play a role in cellular growth, differentiation, adhesion, signaling, cytoskeletal dynamics and membrane properties. Also involved in the transglucosylation of cholesterol, transferring glucose from GlcCer, thereby modifying its water solubility and biological properties. Under specific conditions, may catalyze the reverse reaction, transferring glucose from cholesteryl-3-beta-D-glucoside to ceramide (such as N-acylsphing-4-enine). May play a role in the metabolism of bile acids. Able to hydrolyze bile acid 3-O-glucosides as well as to produce bile acid-glucose conjugates thanks to a bile acid glucosyl transferase activity. Catalyzes the hydrolysis of galactosylceramides/GalCers (such as beta-D-galactosyl-(1&lt;-&gt;1')-N-acylsphing-4-enine), as well as galactosyl transfer between GalCers and cholesterol in vitro with lower activity compared with their activity against GlcCers. This is Non-lysosomal glucosylceramidase from Mus musculus (Mouse).